The primary structure comprises 374 residues: Ribosomal RNA large subunit methyltransferase G (374 aa).

Belongs to the methyltransferase superfamily. RlmG family.

Its subcellular location is the cytoplasm. The catalysed reaction is guanosine(1835) in 23S rRNA + S-adenosyl-L-methionine = N(2)-methylguanosine(1835) in 23S rRNA + S-adenosyl-L-homocysteine + H(+). Its function is as follows. Specifically methylates the guanine in position 1835 (m2G1835) of 23S rRNA. The chain is Ribosomal RNA large subunit methyltransferase G from Pseudomonas fluorescens (strain ATCC BAA-477 / NRRL B-23932 / Pf-5).